The sequence spans 510 residues: Histone deacetylase 3 (510 aa).

The histone deacetylase stretch occupies residues 24-338 (RRVCYFYDPE…WCYETGVALG (315 aa)). His158 acts as the Proton donor/acceptor in catalysis. Zn(2+) is bound by residues Asp193, His195, and Asp281. The disordered stretch occupies residues 394–510 (PSVQFQERIP…ARNEPGSSPK (117 aa)). Composition is skewed to basic and acidic residues over residues 418-434 (DERH…DHKP) and 448-472 (VKRE…HKGP). Residues 485–503 (APTADANAVAVNAPGNARN) show a composition bias toward low complexity.

This sequence belongs to the histone deacetylase family. HD Type 1 subfamily. Zn(2+) is required as a cofactor. As to expression, expressed in roots.

The protein resides in the nucleus. It catalyses the reaction N(6)-acetyl-L-lysyl-[histone] + H2O = L-lysyl-[histone] + acetate. Responsible for the deacetylation of lysine residues on the N-terminal part of the core histones (H2A, H2B, H3 and H4). Histone deacetylation gives a tag for epigenetic repression and plays an important role in transcriptional regulation, cell cycle progression and developmental events. Histone deacetylases act via the formation of large multiprotein complexes. This Oryza sativa subsp. japonica (Rice) protein is Histone deacetylase 3.